Consider the following 174-residue polypeptide: Large ribosomal subunit protein bL12cy (174 aa).

Residues 1 to 45 (MASTTFSSAFSILSLPSSSPSPPPWAPRTLPVANRRRRAAAVAST) constitute a chloroplast transit peptide.

It belongs to the bacterial ribosomal protein bL12 family.

Its subcellular location is the plastid. The protein localises to the chloroplast. The polypeptide is Large ribosomal subunit protein bL12cy (RPL12-2) (Secale cereale (Rye)).